The sequence spans 338 residues: Bifunctional methylenetetrahydrofolate dehydrogenase/cyclohydrolase 2, mitochondrial (338 aa).

Substrate-binding positions include 89 to 93 (YVRNK) and 136 to 138 (VQL). NAD(+)-binding positions include 205–207 (GRS) and Arg-238. 314–318 (PGGVG) is a binding site for substrate.

It belongs to the tetrahydrofolate dehydrogenase/cyclohydrolase family. Mg(2+) is required as a cofactor. Widely expressed.

It localises to the mitochondrion inner membrane. The catalysed reaction is (6R)-5,10-methylene-5,6,7,8-tetrahydrofolate + NAD(+) = (6R)-5,10-methenyltetrahydrofolate + NADH. The enzyme catalyses (6R)-5,10-methenyltetrahydrofolate + H2O = (6R)-10-formyltetrahydrofolate + H(+). It catalyses the reaction (6R)-5,10-methylene-5,6,7,8-tetrahydrofolate + NADP(+) = (6R)-5,10-methenyltetrahydrofolate + NADPH. It functions in the pathway one-carbon metabolism; tetrahydrofolate interconversion. In terms of biological role, bifunctional mitochondrial folate-interconverting enzyme that has both NAD/NADP-dependent methylenetetrahydrofolate dehydrogenase and methenyltetrahydrofolate cyclohydrolase activities. In Mus musculus (Mouse), this protein is Bifunctional methylenetetrahydrofolate dehydrogenase/cyclohydrolase 2, mitochondrial.